The chain runs to 351 residues: Tsukushi-A (351 aa).

The signal sequence occupies residues 1-17 (MALSSWIFFLLVHGIVG). LRR repeat units follow at residues 59-82 (PLDT…VLSG), 85-108 (YTTL…TFSK), 109-132 (LRYL…SFLY), 134-155 (RLTE…AFTL), 158-181 (QGRS…AERP), 182-203 (VPNI…DLHG), 204-226 (IPLR…SFLG), 252-276 (LTSL…MFFG), and 277-300 (LKAL…IMLH).

Interacts with bmp4. Interacts with dll1 (via extracellular region). Interacts with fgf8; inhibits fgf8 signaling. Interacts with nodal2/Xnr2; enhances nodal2 activity. As to expression, during embryogenesis, localized to the animal hemisphere during late blastula and gastrula stages. At stage 10, expression is also detected around the dorsal blastopore lip. Expressed in the mandibular crest segment, branchial crest segment and differentiating somites at stage 21/22. Expressed in the germ ring including the shield at shield stage and in the tailbud at the 10-somite stage. At the early neurula stage (stage 13), expression is hardly detectable in the presumptive neural plate region, and restricted to the non-neural ectoderm where its levels increase by stage 14, especially in the presumptive anterior neural fold. Also expressed in the prospective cranial neural crest. At the early tailbud stage (stage 23), expressed in cranial neural crest cells, the dorsal retina and the lens placode.

The protein localises to the secreted. Its function is as follows. Contributes to various developmental events through its interactions with multiple signaling pathways. Dorsalizing factor which functions as an inhibitor of bone morphogenetic proteins (BMP) during gastrulation. Promotes dll1-dependent activation of Notch signaling and is required for neural crest formation. Induces endoderm and dorsal mesoderm formation by enhancing nodal2/Xnr2 activity while inhibiting ventrolateral mesoderm formation through inhibition of fgf8. This Xenopus laevis (African clawed frog) protein is Tsukushi-A.